Consider the following 342-residue polypeptide: Trans-enoyl reductase himH (342 aa).

46–49 (TDWK) contacts NADP(+). 133–140 (LSVSTAAS) lines the substrate pocket. Residues 168–171 (SSSV), 191–194 (SQAN), 255–256 (VM), and 329–330 (VS) each bind NADP(+).

Belongs to the zinc-containing alcohol dehydrogenase family. As to quaternary structure, monomer.

The protein operates within secondary metabolite biosynthesis. In terms of biological role, trans-enoyl reductase; part of the him gene cluster that mediates the biosynthesis of himeic acid A, a ubiquitin-activating enzyme (E1) inhibitor. First, himA, together with the trans-enoyl reductase himH, catalyzes the formation of apolyketide chain, which is then condensed with leucine by the NRPS activity of himA. Dieckmann cyclization and release from himA gives a tetramic acid intermediate as the product of himA PKS-NRPS. HimG then catalyzes alpha-oxidation of the tetramic acid ring, with a subsequent rearrangement to yield apyrone intermediate. Two terminal methyl groups of polyketide and amide side chains are oxidized to carboxylic acids by himC cytochrome P450 monooxygenase to form himeic acid A. Himeic acid A is further converted to himeic acid B and C during culture growth. No gene responsible for pyrone to pyridone conversion was found in the him gene cluster and himeic acid A is non-enzymatically converted to himeic acid C by the incorporation of an ammonium nitrogen atom in a pH5 buffer, and to himeic acid B at a conversion ratio of 50% during incubation in MeOH for 5 days. The chain is Trans-enoyl reductase himH from Aspergillus japonicus.